Here is a 284-residue protein sequence, read N- to C-terminus: 2-dehydro-3-deoxyphosphooctonate aldolase (284 aa).

This sequence belongs to the KdsA family.

The protein resides in the cytoplasm. The catalysed reaction is D-arabinose 5-phosphate + phosphoenolpyruvate + H2O = 3-deoxy-alpha-D-manno-2-octulosonate-8-phosphate + phosphate. It participates in carbohydrate biosynthesis; 3-deoxy-D-manno-octulosonate biosynthesis; 3-deoxy-D-manno-octulosonate from D-ribulose 5-phosphate: step 2/3. It functions in the pathway bacterial outer membrane biogenesis; lipopolysaccharide biosynthesis. The polypeptide is 2-dehydro-3-deoxyphosphooctonate aldolase (Methylobacterium radiotolerans (strain ATCC 27329 / DSM 1819 / JCM 2831 / NBRC 15690 / NCIMB 10815 / 0-1)).